A 711-amino-acid chain; its full sequence is Polyribonucleotide nucleotidyltransferase (711 aa).

Mg(2+)-binding residues include aspartate 486 and aspartate 492. Residues 553–612 (PRIHTIKINPDKIKDVIGKGGSVIRALTEETGTTIEIEDDGTVKIAATDGEKAKHAIRRI) enclose the KH domain. One can recognise an S1 motif domain in the interval 622–690 (GRVYTGKVTR…RQGRIRLSIK (69 aa)). The segment at 690–711 (KEATEQSQPAAAPEAPAAEQGE) is disordered. Residues 694–711 (EQSQPAAAPEAPAAEQGE) show a composition bias toward low complexity.

It belongs to the polyribonucleotide nucleotidyltransferase family. Component of the RNA degradosome, which is a multiprotein complex involved in RNA processing and mRNA degradation. Requires Mg(2+) as cofactor.

It localises to the cytoplasm. It catalyses the reaction RNA(n+1) + phosphate = RNA(n) + a ribonucleoside 5'-diphosphate. Its function is as follows. Involved in mRNA degradation. Catalyzes the phosphorolysis of single-stranded polyribonucleotides processively in the 3'- to 5'-direction. The polypeptide is Polyribonucleotide nucleotidyltransferase (Shigella dysenteriae serotype 1 (strain Sd197)).